Here is a 194-residue protein sequence, read N- to C-terminus: E3 ubiquitin-protein ligase RNF185 (194 aa).

Low complexity predominate over residues 1–27 (MASAAASESSSSSSSSSAGAANGQSAG). The interval 1-32 (MASAAASESSSSSSSSSAGAANGQSAGESGGG) is disordered. A required for ubiquitin ligase activity and protection against ER stress-induced cell death region spans residues 31 to 82 (GGGAQDSTFECNICLDTSKDAVISLCGHLFCWPCLHQWLETRPNRQVCPVCK). Residues 41–82 (CNICLDTSKDAVISLCGHLFCWPCLHQWLETRPNRQVCPVCK) form an RING-type zinc finger. The disordered stretch occupies residues 92-126 (PLYGRGSTGQQDPREKTPPRPQGQRPEPENRGGFQ). A run of 2 helical transmembrane segments spans residues 133 to 153 (GGFQMSFGIGAFPFGIFATAF) and 174 to 194 (QFLSRLFLFVALLIMFWLLIA).

It localises to the mitochondrion outer membrane. Its subcellular location is the endoplasmic reticulum membrane. It catalyses the reaction S-ubiquitinyl-[E2 ubiquitin-conjugating enzyme]-L-cysteine + [acceptor protein]-L-lysine = [E2 ubiquitin-conjugating enzyme]-L-cysteine + N(6)-ubiquitinyl-[acceptor protein]-L-lysine.. Its pathway is protein modification; protein ubiquitination. In terms of biological role, E3 ubiquitin-protein ligase that regulates selective mitochondrial autophagy by mediating 'Lys-63'-linked polyubiquitination. Acts in the endoplasmic reticulum (ER)-associated degradation (ERAD) pathway, which targets misfolded proteins that accumulate in the endoplasmic reticulum (ER) for ubiquitination and subsequent proteasome-mediated degradation. Protects cells from ER stress-induced apoptosis. Responsible for the cotranslational ubiquitination and degradation of CFTR in the ERAD pathway. Also acts as a regulator of the innate antiviral response by catalyzing 'Lys-27'-linked polyubiquitination of CGAS, thereby promoting CGAS cyclic GMP-AMP synthase activity. Preferentially associates with the E2 enzymes UBE2J1 and UBE2J2. The sequence is that of E3 ubiquitin-protein ligase RNF185 (rnf185) from Danio rerio (Zebrafish).